We begin with the raw amino-acid sequence, 206 residues long: Adenylyl-sulfate kinase (206 aa).

An ATP-binding site is contributed by 31–38 (GLSASGKS). The active-site Phosphoserine intermediate is the S105.

Belongs to the APS kinase family.

It catalyses the reaction adenosine 5'-phosphosulfate + ATP = 3'-phosphoadenylyl sulfate + ADP + H(+). It functions in the pathway sulfur metabolism; hydrogen sulfide biosynthesis; sulfite from sulfate: step 2/3. Catalyzes the synthesis of activated sulfate. This is Adenylyl-sulfate kinase (sD) from Emericella nidulans (strain FGSC A4 / ATCC 38163 / CBS 112.46 / NRRL 194 / M139) (Aspergillus nidulans).